The chain runs to 488 residues: Histone deacetylase 2 (488 aa).

A histone deacetylase region spans residues 9 to 322 (KKKVCYYYDG…WTYETAVALD (314 aa)). 1D-myo-inositol 1,4,5,6-tetrakisphosphate is bound by residues Gly-28 and Lys-32. Position 75 is an N6-acetyllysine; alternate (Lys-75). Residue Lys-75 forms a Glycyl lysine isopeptide (Lys-Gly) (interchain with G-Cter in SUMO2); alternate linkage. Residue His-142 is part of the active site. Residues Asp-175, Asp-177, His-179, Phe-188, Thr-191, Val-194, Ser-198, and Phe-199 each coordinate Ca(2+). Zn(2+) contacts are provided by Asp-177 and His-179. Position 221 is an N6-acetyllysine (Lys-221). Tyr-223 contributes to the Ca(2+) binding site. Cys-262 is subject to S-nitrosocysteine. Asp-265 serves as a coordination point for Zn(2+). Arg-271 provides a ligand contact to 1D-myo-inositol 1,4,5,6-tetrakisphosphate. Cys-274 carries the post-translational modification S-nitrosocysteine. The interval 389–488 (AVHEDSGDED…GAKSEQLSNP (100 aa)) is disordered. Ser-394, Ser-407, Ser-422, and Ser-424 each carry phosphoserine. A compositionally biased stretch (basic and acidic residues) spans 402–417 (PDKRISIRASDKRIAC). A compositionally biased stretch (acidic residues) spans 418-428 (DEEFSDSEDEG). Basic and acidic residues predominate over residues 429-481 (EGGRRNVADHKKGAKKARIEEDKKETEDKKTDVKEEDKSKDNSGEKTDPKGAK). Glycyl lysine isopeptide (Lys-Gly) (interchain with G-Cter in SUMO2) cross-links involve residues Lys-439, Lys-452, Lys-458, Lys-462, Lys-478, and Lys-481.

It belongs to the histone deacetylase family. HD type 1 subfamily. Part of the core histone deacetylase (HDAC) complex composed of HDAC1, HDAC2, RBBP4 and RBBP7, the core complex associates with SIN3, SAP18 and SAP30 to form the SIN3 HDAC complex. Component of the nucleosome remodeling and deacetylase (NuRD) repressor complex, composed of core proteins MTA1, MTA2, MTA3, RBBP4, RBBP7, HDAC1, HDAC2, MBD2, MBD3, and peripherally associated proteins CDK2AP1, CDK2AP2, GATAD2A, GATAD2B, CHD3, CHD4 and CHD5. The exact stoichiometry of the NuRD complex is unknown, and some subunits such as MBD2 and MBD3, GATAD2A and GATAD2B, and CHD3, CHD4 and CHD5 define mutually exclusive NuRD complexes. Component of a RCOR/GFI/KDM1A/HDAC complex. Component of a BHC histone deacetylase complex that contains HDAC1, HDAC2, HMG20B, KDM1A, RCOR1 and PHF21A. The BHC complex may also contain ZMYM2, ZNF217, ZMYM3, GSE1 and GTF2I. Part of a complex containing the core histones H2A, H2B, H3 and H4, DEK and unphosphorylated DAXX. Part of a complex containing ATR and CHD4. Forms a heterologous complex at least with YY1. Interacts in the late S-phase of DNA-replication with DNMT1 in the other transcriptional repressor complex composed of DNMT1, DMAP1, PCNA, CAF1. Component of a mSin3A corepressor complex that contains SIN3A, SAP130, SUDS3, ARID4B, HDAC1 and HDAC2. Part of a complex composed of TRIM28, HDAC1, HDAC2 and EHMT2. Part of a complex containing at least CDYL, MIER1, MIER2, HDAC1 and HDAC2. Component of a histone deacetylase complex containing DNTTIP1, ZNF541, HDAC1 and HDAC2. Forms a complex comprising APPL1, RUVBL2, APPL2, CTNNB1 and HDAC1. Interacts directly with GFI1. Interacts directly with GFI1B. Interacts with APEX1; the interaction is not dependent on the acetylated status of APEX1. Interacts with ATR. Interacts with BCL6 (non-acetylated form). Interacts with BEND3. Interacts with CBFA2T3. Interacts with CDK2AP1. Interacts with CHD4. Interacts with CHD5. Interacts with CHFR. Interacts with CRY1. Interacts with DNMT1. Interacts with GATAD2A. Interacts with HCFC1. Interacts with HDAC7. Interacts with HDAC10. Interacts with INSM1. Interacts with KDM4A. Interacts with MACROH2A1 (via the non-histone region). Interacts with MBD3L2. Interacts with MTA1, with a preference for sumoylated MTA1. Interacts with NACC2. Interacts with NRIP1. Interacts with PELP1. Interacts with PIMREG. Interacts with PRDM6. Interacts with PWWP2B Interacts with SAP30. Interacts with SAP30L. Interacts with SETDB1. Interacts with SIX3. Interacts with SMARCAD1. Interacts with SNW1. Interacts with SPHK2. Interacts with SPEN/MINT. Interacts (CK2 phosphorylated form) with SP3. Interacts with SUV39H1. Interacts with TSHZ3 (via its N-terminus). Interacts with ZMYND8. Interacts with ZNF431. Interacts with ZNF263; recruited to the SIX3 promoter along with other proteins involved in chromatin modification and transcriptional corepression where it contributes to transcriptional repression. Identified in a complex with HDAC1, KCTD19, DNTTIP1 and ZNF541. Component of the SIN3B complex, which includes SIN3B, HDAC2, PHF12 and MORF4L1; interacts directly with all subunits. It depends on Zn(2+) as a cofactor. The cofactor is Ca(2+). In terms of processing, S-nitrosylated by GAPDH. In neurons, S-nitrosylation at Cys-262 and Cys-274 does not affect enzyme activity, but induces HDAC2 release from chromatin. This in turn increases acetylation of histones surrounding neurotrophin-dependent gene promoters and promotes their transcription. In embryonic cortical neurons, S-Nitrosylation regulates dendritic growth and branching.

It localises to the nucleus. Its subcellular location is the cytoplasm. The enzyme catalyses N(6)-acetyl-L-lysyl-[histone] + H2O = L-lysyl-[histone] + acetate. The catalysed reaction is N(6)-acetyl-L-lysyl-[protein] + H2O = L-lysyl-[protein] + acetate. It catalyses the reaction N(6)-(2E)-butenoyl-L-lysyl-[protein] + H2O = (2E)-2-butenoate + L-lysyl-[protein]. It carries out the reaction N(6)-(2-hydroxyisobutanoyl)-L-lysyl-[protein] + H2O = 2-hydroxy-2-methylpropanoate + L-lysyl-[protein]. The enzyme catalyses N(6)-[(S)-lactoyl]-L-lysyl-[protein] + H2O = (S)-lactate + L-lysyl-[protein]. Inositol tetraphosphate (1D-myo-inositol 1,4,5,6-tetrakisphosphate) may act as an intermolecular glue between HDAC2 and N-Cor repressor complex components. In terms of biological role, histone deacetylase that catalyzes the deacetylation of lysine residues on the N-terminal part of the core histones (H2A, H2B, H3 and H4). Histone deacetylation gives a tag for epigenetic repression and plays an important role in transcriptional regulation, cell cycle progression and developmental events. Histone deacetylases act via the formation of large multiprotein complexes. Forms transcriptional repressor complexes by associating with MAD, SIN3, YY1 and N-COR. Component of a RCOR/GFI/KDM1A/HDAC complex that suppresses, via histone deacetylase (HDAC) recruitment, a number of genes implicated in multilineage blood cell development. Acts as a component of the histone deacetylase NuRD complex which participates in the remodeling of chromatin. Component of the SIN3B complex that represses transcription and counteracts the histone acetyltransferase activity of EP300 through the recognition H3K27ac marks by PHF12 and the activity of the histone deacetylase HDAC2. Also deacetylates non-histone targets: deacetylates TSHZ3, thereby regulating its transcriptional repressor activity. May be involved in the transcriptional repression of circadian target genes, such as PER1, mediated by CRY1 through histone deacetylation. Involved in MTA1-mediated transcriptional corepression of TFF1 and CDKN1A. In addition to protein deacetylase activity, also acts as a protein-lysine deacylase by recognizing other acyl groups: catalyzes removal of (2E)-butenoyl (crotonyl), lactoyl (lactyl) and 2-hydroxyisobutanoyl (2-hydroxyisobutyryl) acyl groups from lysine residues, leading to protein decrotonylation, delactylation and de-2-hydroxyisobutyrylation, respectively. This Mus musculus (Mouse) protein is Histone deacetylase 2.